We begin with the raw amino-acid sequence, 200 residues long: 3-isopropylmalate dehydratase small subunit (200 aa).

Belongs to the LeuD family. LeuD type 1 subfamily. Heterodimer of LeuC and LeuD.

The catalysed reaction is (2R,3S)-3-isopropylmalate = (2S)-2-isopropylmalate. It participates in amino-acid biosynthesis; L-leucine biosynthesis; L-leucine from 3-methyl-2-oxobutanoate: step 2/4. Functionally, catalyzes the isomerization between 2-isopropylmalate and 3-isopropylmalate, via the formation of 2-isopropylmaleate. In Aliivibrio fischeri (strain MJ11) (Vibrio fischeri), this protein is 3-isopropylmalate dehydratase small subunit.